Consider the following 208-residue polypeptide: Outer-membrane lipoprotein LolB (208 aa).

The signal sequence occupies residues 1-17; the sequence is MIRRLLGVALLTGAITG. The N-palmitoyl cysteine moiety is linked to residue C18. The S-diacylglycerol cysteine moiety is linked to residue C18.

It belongs to the LolB family. Monomer.

The protein resides in the cell outer membrane. Its function is as follows. Plays a critical role in the incorporation of lipoproteins in the outer membrane after they are released by the LolA protein. The polypeptide is Outer-membrane lipoprotein LolB (Marinobacter nauticus (strain ATCC 700491 / DSM 11845 / VT8) (Marinobacter aquaeolei)).